The sequence spans 209 residues: Uracil phosphoribosyltransferase (209 aa).

5-phospho-alpha-D-ribose 1-diphosphate contacts are provided by residues Arg-79, Arg-104, and 131–139 (DPMLATGGS). Uracil is bound by residues Ile-194 and 199 to 201 (GDA). Asp-200 serves as a coordination point for 5-phospho-alpha-D-ribose 1-diphosphate.

It belongs to the UPRTase family. The cofactor is Mg(2+).

It catalyses the reaction UMP + diphosphate = 5-phospho-alpha-D-ribose 1-diphosphate + uracil. It functions in the pathway pyrimidine metabolism; UMP biosynthesis via salvage pathway; UMP from uracil: step 1/1. Allosterically activated by GTP. In terms of biological role, catalyzes the conversion of uracil and 5-phospho-alpha-D-ribose 1-diphosphate (PRPP) to UMP and diphosphate. The protein is Uracil phosphoribosyltransferase of Lachnoclostridium phytofermentans (strain ATCC 700394 / DSM 18823 / ISDg) (Clostridium phytofermentans).